A 258-amino-acid polypeptide reads, in one-letter code: DNA-directed RNA polymerase subunit Rpo3 (258 aa).

This sequence belongs to the archaeal Rpo3/eukaryotic RPB3 RNA polymerase subunit family. In terms of assembly, part of the RNA polymerase complex.

It is found in the cytoplasm. The enzyme catalyses RNA(n) + a ribonucleoside 5'-triphosphate = RNA(n+1) + diphosphate. Functionally, DNA-dependent RNA polymerase (RNAP) catalyzes the transcription of DNA into RNA using the four ribonucleoside triphosphates as substrates. The polypeptide is DNA-directed RNA polymerase subunit Rpo3 (Pyrobaculum calidifontis (strain DSM 21063 / JCM 11548 / VA1)).